The following is a 275-amino-acid chain: Adenylate kinase (275 aa).

54–59 provides a ligand contact to ATP; sequence GAGKGT. The segment at 74 to 103 is NMP; that stretch reads ATGDMLRSQVAKKTPLGREAKKIMDQGGLV. Residues Thr-75, Arg-80, 101–103, 130–133, and Gln-137 each bind AMP; these read GLV and GFPR. The interval 171–208 is LID; the sequence is GRLVHPASGRSYHRVFNPPKADMKDDITGEPLVSRSDD. ATP is bound by residues Arg-172 and 181–182; that span reads SY. Residues Arg-205 and Arg-216 each contribute to the AMP site. An ATP-binding site is contributed by Gln-244.

The protein belongs to the adenylate kinase family. AK2 subfamily. In terms of assembly, monomer.

Its subcellular location is the cytoplasm. It localises to the cytosol. The protein resides in the mitochondrion intermembrane space. It carries out the reaction AMP + ATP = 2 ADP. Catalyzes the reversible transfer of the terminal phosphate group between ATP and AMP. Plays an important role in cellular energy homeostasis and in adenine nucleotide metabolism. Adenylate kinase activity is critical for regulation of the phosphate utilization and the AMP de novo biosynthesis pathways. This chain is Adenylate kinase (adk1), found in Botryotinia fuckeliana (strain B05.10) (Noble rot fungus).